Consider the following 286-residue polypeptide: Putative quercetin 2,3-dioxygenase PA2418 (286 aa).

A divalent metal cation contacts are provided by His61, His63, His105, and Glu107.

The protein belongs to the pirin family. The cofactor is a divalent metal cation.

The catalysed reaction is quercetin + O2 = 2-(3,4-dihydroxybenzoyloxy)-4,6-dihydroxybenzoate + CO. The protein operates within flavonoid metabolism; quercetin degradation. Putative quercetin 2,3-dioxygenase. In Pseudomonas aeruginosa (strain ATCC 15692 / DSM 22644 / CIP 104116 / JCM 14847 / LMG 12228 / 1C / PRS 101 / PAO1), this protein is Putative quercetin 2,3-dioxygenase PA2418.